Consider the following 266-residue polypeptide: Gasdermin bGSDM (266 aa).

A run of 4 beta stranded transmembrane segments spans residues 65-81, 93-113, 162-181, and 187-203; these read FSGQ…GADL, EDKL…FAYE, QFTV…EAAV, and AHAS…SLQT. The interval 248–266 is C-terminal region; sequence GEEDFSVQPLQAPSGLLKL.

Belongs to the bacterial gasdermin family. Monomer. In terms of assembly, forms large, homooligomeric ring-shaped pores when inserted in membranes.

It localises to the cytoplasm. The protein resides in the cell membrane. With respect to regulation, the full-length protein before cleavage is inactive: intramolecular interactions between the N-terminal domain and the C-terminal region mediate autoinhibition. The pyroptosis-like-inducing activity is carried by the released N-terminal domain (Gasdermin bGSDM, N-terminus). In terms of biological role, precursor of a pore-forming protein involved in defense against bacteriophages. Cleavage of this precursor by its dedicated protease releases the active moiety (gasdermin bGSDM, N-terminus) which inserts into membranes, forming pores and triggering cell death. Expression of bGSDM and the neighboring protease gene (Ga0307981_100051430) is highly toxic in E.coli. Functionally, pore-forming protein that causes membrane permeabilization via a pyroptosis-like activity. This is the active form which makes ring-like pores with an interior pore diameter of 130-190 Angstroms, when integrated in liposomes. The protein is Gasdermin bGSDM of Unknown prokaryotic organism.